The following is a 338-amino-acid chain: Solute carrier family 35 member G5 (338 aa).

The tract at residues 1-21 is disordered; that stretch reads MAGSHPYFNLPDSTHPSPPSA. The next 9 membrane-spanning stretches (helical) occupy residues 37–57, 67–87, 105–125, 160–180, 190–210, 221–241, 250–270, 281–301, and 305–325; these read TNGLLVALLGGGLPAGFVGPL, LPSLELLICRCLFHLPIALPL, CFCALLNVLSIGCAYSAVQVV, CGLLGSILGLIIIVGPGLWTL, ALGYVQAFLGGLALSLGLLVY, TVAFLSGLVGLLGSVPGLFVL, LLSWSCVGAVGILALVSFTCV, LVCAVLHSEVVVALILQYYVL, and VAPSDIMGAGIVLGSIAIITA. Residues 49 to 174 form the EamA 1 domain; that stretch reads LPAGFVGPLS…SILGLIIIVG (126 aa). The EamA 2 domain occupies 272–325; the sequence is YAVTKAHPALVCAVLHSEVVVALILQYYVLHETVAPSDIMGAGIVLGSIAIITA.

The protein belongs to the SLC35G solute transporter family.

It is found in the membrane. This Pan troglodytes (Chimpanzee) protein is Solute carrier family 35 member G5 (SLC35G5).